The chain runs to 216 residues: Neurotrophic factor BDNF precursor form (216 aa).

A propeptide spanning residues 1-108 is cleaved from the precursor; sequence PMKEVSIRGQ…AANMSMRVRR (108 aa). A glycan (N-linked (GlcNAc...) asparagine) is linked at Asn101. Cys121 and Cys188 form a disulfide bridge.

This sequence belongs to the NGF-beta family.

Its subcellular location is the secreted. In terms of biological role, promotes the survival of neuronal populations that are all located either in the central nervous system or directly connected to it. This Cylindrophis ruffus (Red-tailed pipe snake) protein is Neurotrophic factor BDNF precursor form (BDNF).